Reading from the N-terminus, the 469-residue chain is Neuraminidase (469 aa).

The Intravirion portion of the chain corresponds to 1–6; sequence MNTNQR. A helical transmembrane segment spans residues 7-27; the sequence is IITIGTICLIVGIISLLLQIG. Residues 11–33 are involved in apical transport and lipid raft association; it reads GTICLIVGIISLLLQIGNIISLW. Over 28-469 the chain is Virion surface; the sequence is NIISLWISHS…GADLPFTIDK (442 aa). The interval 36 to 90 is hypervariable stalk region; sequence HSIQTREKSHPEVCNQSIITYENNTWVNQTYVNISNANIVAEQGVTSIILAGNSS. 5 N-linked (GlcNAc...) asparagine; by host glycosylation sites follow: Asn50, Asn58, Asn63, Asn68, and Asn88. Residues 91 to 469 form a head of neuraminidase region; the sequence is LCPISGWAIY…GADLPFTIDK (379 aa). 8 disulfide bridges follow: Cys92–Cys417, Cys124–Cys129, Cys184–Cys231, Cys233–Cys238, Cys279–Cys292, Cys281–Cys290, Cys318–Cys335, and Cys421–Cys446. Arg118 lines the substrate pocket. Residue Asn146 is glycosylated (N-linked (GlcNAc...) asparagine; by host). Asp151 serves as the catalytic Proton donor/acceptor. Arg152 provides a ligand contact to substrate. The N-linked (GlcNAc...) asparagine; by host glycan is linked to Asn235. 277–278 lines the substrate pocket; sequence EE. Residue Arg293 participates in substrate binding. Ca(2+) contacts are provided by Asp294, Asp324, and Asn344. Arg368 is a binding site for substrate. The active-site Nucleophile is the Tyr402. The N-linked (GlcNAc...) asparagine; by host glycan is linked to Asn454.

The protein belongs to the glycosyl hydrolase 34 family. In terms of assembly, homotetramer. Ca(2+) serves as cofactor. Post-translationally, N-glycosylated.

The protein localises to the virion membrane. The protein resides in the host apical cell membrane. The enzyme catalyses Hydrolysis of alpha-(2-&gt;3)-, alpha-(2-&gt;6)-, alpha-(2-&gt;8)- glycosidic linkages of terminal sialic acid residues in oligosaccharides, glycoproteins, glycolipids, colominic acid and synthetic substrates.. Its activity is regulated as follows. Inhibited by the neuraminidase inhibitors zanamivir (Relenza) and oseltamivir (Tamiflu). These drugs interfere with the release of progeny virus from infected cells and are effective against all influenza strains. Resistance to neuraminidase inhibitors is quite rare. Functionally, catalyzes the removal of terminal sialic acid residues from viral and cellular glycoconjugates. Cleaves off the terminal sialic acids on the glycosylated HA during virus budding to facilitate virus release. Additionally helps virus spread through the circulation by further removing sialic acids from the cell surface. These cleavages prevent self-aggregation and ensure the efficient spread of the progeny virus from cell to cell. Otherwise, infection would be limited to one round of replication. Described as a receptor-destroying enzyme because it cleaves a terminal sialic acid from the cellular receptors. May facilitate viral invasion of the upper airways by cleaving the sialic acid moieties on the mucin of the airway epithelial cells. Likely to plays a role in the budding process through its association with lipid rafts during intracellular transport. May additionally display a raft-association independent effect on budding. Plays a role in the determination of host range restriction on replication and virulence. Sialidase activity in late endosome/lysosome traffic seems to enhance virus replication. This chain is Neuraminidase, found in Aves (Human).